A 193-amino-acid polypeptide reads, in one-letter code: MKTLIRPLVVLFVVLTAVTGLAYPAVMTVFGQAVFPSQANGSLIEQNGKVVGSALIGQSFDAPKYFWGRLSATAPMPYNAAGSGGSNLGPLNPSLADQVKARIAALRDAGTDLSKPVPVDLVTASASGLDPEITPAAAAYQVERVAKARNLTPDAVAQLVAANTAGRQFGVLGEPRVNVLKLNLALDAAQAAH.

The chain crosses the membrane as a helical span at residues 7–27 (PLVVLFVVLTAVTGLAYPAVM).

Belongs to the KdpC family. As to quaternary structure, the system is composed of three essential subunits: KdpA, KdpB and KdpC.

It is found in the cell inner membrane. Its function is as follows. Part of the high-affinity ATP-driven potassium transport (or Kdp) system, which catalyzes the hydrolysis of ATP coupled with the electrogenic transport of potassium into the cytoplasm. This subunit acts as a catalytic chaperone that increases the ATP-binding affinity of the ATP-hydrolyzing subunit KdpB by the formation of a transient KdpB/KdpC/ATP ternary complex. The protein is Potassium-transporting ATPase KdpC subunit of Burkholderia orbicola (strain MC0-3).